The following is a 469-amino-acid chain: Citrate synthase, mitochondrial (469 aa).

The transit peptide at 1-30 (MSFLTVSRLAPKLLNSKNATYFLVAARNAS) directs the protein to the mitochondrion. Residues His-304 and His-350 contribute to the active site. Arg-359 is an oxaloacetate binding site. Residue Asp-405 is part of the active site. Arg-431 and Arg-451 together coordinate oxaloacetate.

The protein belongs to the citrate synthase family. As to quaternary structure, homodimer.

Its subcellular location is the mitochondrion matrix. It carries out the reaction oxaloacetate + acetyl-CoA + H2O = citrate + CoA + H(+). Its pathway is carbohydrate metabolism; tricarboxylic acid cycle; isocitrate from oxaloacetate: step 1/2. Key enzyme of the Krebs tricarboxylic acid cycle which catalyzes the synthesis of citrate from acetyl coenzyme A and oxaloacetate. This chain is Citrate synthase, mitochondrial (cs), found in Xiphias gladius (Swordfish).